The following is a 392-amino-acid chain: Probable tRNA sulfurtransferase (392 aa).

In terms of domain architecture, THUMP spans 59-167; sequence ADITDRVKKV…DQAFVFSNKI (109 aa). Residues 184–185, 209–210, Arg-266, Gly-288, and Gln-297 each bind ATP; these read LL and HF.

The protein belongs to the ThiI family.

The protein localises to the cytoplasm. The enzyme catalyses [ThiI sulfur-carrier protein]-S-sulfanyl-L-cysteine + a uridine in tRNA + 2 reduced [2Fe-2S]-[ferredoxin] + ATP + H(+) = [ThiI sulfur-carrier protein]-L-cysteine + a 4-thiouridine in tRNA + 2 oxidized [2Fe-2S]-[ferredoxin] + AMP + diphosphate. It carries out the reaction [ThiS sulfur-carrier protein]-C-terminal Gly-Gly-AMP + S-sulfanyl-L-cysteinyl-[cysteine desulfurase] + AH2 = [ThiS sulfur-carrier protein]-C-terminal-Gly-aminoethanethioate + L-cysteinyl-[cysteine desulfurase] + A + AMP + 2 H(+). The protein operates within cofactor biosynthesis; thiamine diphosphate biosynthesis. In terms of biological role, catalyzes the ATP-dependent transfer of a sulfur to tRNA to produce 4-thiouridine in position 8 of tRNAs, which functions as a near-UV photosensor. Also catalyzes the transfer of sulfur to the sulfur carrier protein ThiS, forming ThiS-thiocarboxylate. This is a step in the synthesis of thiazole, in the thiamine biosynthesis pathway. The sulfur is donated as persulfide by IscS. The polypeptide is Probable tRNA sulfurtransferase (Alkaliphilus oremlandii (strain OhILAs) (Clostridium oremlandii (strain OhILAs))).